A 449-amino-acid chain; its full sequence is Hyaluronidase-1 (449 aa).

Positions Met1–Gly39 are cleaved as a signal peptide. 2 disulfide bridges follow: Cys58-Cys348 and Cys222-Cys236. N-linked (GlcNAc...) asparagine glycans are attached at residues Asn85 and Asn114. The active-site Proton donor is Glu146. Asn231, Asn252, and Asn365 each carry an N-linked (GlcNAc...) asparagine glycan. 3 disulfides stabilise this stretch: Cys373-Cys384, Cys378-Cys433, and Cys435-Cys444. An EGF-like domain is found at Cys433–Cys444.

This sequence belongs to the glycosyl hydrolase 56 family.

The protein localises to the secreted. It is found in the lysosome. It catalyses the reaction Random hydrolysis of (1-&gt;4)-linkages between N-acetyl-beta-D-glucosamine and D-glucuronate residues in hyaluronate.. May have a role in promoting tumor progression. May block the TGFB1-enhanced cell growth. Overexpression of HYAL1 suppressed the growth rate of colon carcinoma cell tumors in an experimental model. The protein is Hyaluronidase-1 (Hyal1) of Rattus norvegicus (Rat).